The primary structure comprises 161 residues: ATP synthase subunit b (161 aa).

A helical transmembrane segment spans residues 10–29 (AVVQLLNFLFLLWILNKLLY).

Belongs to the ATPase B chain family. F-type ATPases have 2 components, F(1) - the catalytic core - and F(0) - the membrane proton channel. F(1) has five subunits: alpha(3), beta(3), gamma(1), delta(1), epsilon(1). F(0) has three main subunits: a(1), b(2) and c(10-14). The alpha and beta chains form an alternating ring which encloses part of the gamma chain. F(1) is attached to F(0) by a central stalk formed by the gamma and epsilon chains, while a peripheral stalk is formed by the delta and b chains.

The protein resides in the cell inner membrane. Functionally, f(1)F(0) ATP synthase produces ATP from ADP in the presence of a proton or sodium gradient. F-type ATPases consist of two structural domains, F(1) containing the extramembraneous catalytic core and F(0) containing the membrane proton channel, linked together by a central stalk and a peripheral stalk. During catalysis, ATP synthesis in the catalytic domain of F(1) is coupled via a rotary mechanism of the central stalk subunits to proton translocation. Its function is as follows. Component of the F(0) channel, it forms part of the peripheral stalk, linking F(1) to F(0). The chain is ATP synthase subunit b from Fervidobacterium nodosum (strain ATCC 35602 / DSM 5306 / Rt17-B1).